The chain runs to 111 residues: Ribonuclease P protein component (111 aa).

It belongs to the RnpA family. As to quaternary structure, consists of a catalytic RNA component (M1 or rnpB) and a protein subunit.

The enzyme catalyses Endonucleolytic cleavage of RNA, removing 5'-extranucleotides from tRNA precursor.. Its function is as follows. RNaseP catalyzes the removal of the 5'-leader sequence from pre-tRNA to produce the mature 5'-terminus. It can also cleave other RNA substrates such as 4.5S RNA. The protein component plays an auxiliary but essential role in vivo by binding to the 5'-leader sequence and broadening the substrate specificity of the ribozyme. In Streptococcus thermophilus (strain CNRZ 1066), this protein is Ribonuclease P protein component.